The chain runs to 312 residues: Pyridoxal 5'-phosphate synthase subunit PDX1 (312 aa).

Asp-43 is a D-ribose 5-phosphate binding site. The active-site Schiff-base intermediate with D-ribose 5-phosphate is Lys-100. Gly-172 is a binding site for D-ribose 5-phosphate. D-glyceraldehyde 3-phosphate is bound at residue Arg-184. Residues Gly-233 and 254–255 (GS) contribute to the D-ribose 5-phosphate site.

The protein belongs to the PdxS/SNZ family.

It carries out the reaction aldehydo-D-ribose 5-phosphate + D-glyceraldehyde 3-phosphate + L-glutamine = pyridoxal 5'-phosphate + L-glutamate + phosphate + 3 H2O + H(+). The protein operates within cofactor biosynthesis; pyridoxal 5'-phosphate biosynthesis. Its function is as follows. Catalyzes the formation of pyridoxal 5'-phosphate from ribose 5-phosphate (RBP), glyceraldehyde 3-phosphate (G3P) and ammonia. The ammonia is provided by PDX2. Can also use ribulose 5-phosphate and dihydroxyacetone phosphate as substrates, resulting from enzyme-catalyzed isomerization of RBP and G3P, respectively. Also plays an indirect role in resistance to singlet oxygen-generating photosensitizers. The sequence is that of Pyridoxal 5'-phosphate synthase subunit PDX1 (PDX1) from Phaseolus vulgaris (Kidney bean).